The sequence spans 373 residues: SAM domain-containing protein SAMSN-1 (373 aa).

The tract at residues 1-72 (MLKRKPSNVS…GGGLGKKMRA (72 aa)) is disordered. The Important for interaction with 14-3-3 proteins motif lies at 20–25 (RSSSFG). A phosphoserine mark is found at Ser23 and Ser34. The span at 37-48 (KPDDSTEAHEGD) shows a compositional bias: basic and acidic residues. Residues 50-61 (TNGSGEQSKTSN) are compositionally biased toward polar residues. Ser74 carries the phosphoserine modification. At Thr76 the chain carries Phosphothreonine. Phosphoserine occurs at positions 90 and 119. Residues 91 to 153 (EEKDEEDGEN…DGTSNRDSFR (63 aa)) are disordered. Over residues 123-146 (SDSMDSLYSGQSSSSGITSCSDGT) the composition is skewed to low complexity. Phosphotyrosine is present on Tyr160. Residues 163–224 (PFCGRARVHT…KFIYVDVISE (62 aa)) form the SH3 domain. The 65-residue stretch at 241–305 (KKSKTLQEFL…LSAAENFLEE (65 aa)) folds into the SAM domain. The tract at residues 337–359 (DSGCYISSGNSDNGKEDLESENL) is disordered.

As to quaternary structure, interacts with FASLG. Interacts with phosphotyrosine containing proteins. Interacts (via SH3 domain) with CTTN. Interacts (phosphorylated at Ser-23) with YWHAB, YWHAE, YWHAG, YWHAH, YWHAZ and SFN. Interacts directly with SAP30 and HDAC1. Identified in a complex with SAP30 and HDAC1. In terms of tissue distribution, detected in peripheral blood B-cells (at protein level). Detected in spleen, liver and peripheral blood.

It localises to the nucleus. Its subcellular location is the cytoplasm. It is found in the cell projection. The protein localises to the ruffle. Functionally, negative regulator of B-cell activation. Down-regulates cell proliferation (in vitro). Promotes RAC1-dependent membrane ruffle formation and reorganization of the actin cytoskeleton. Regulates cell spreading and cell polarization. Stimulates HDAC1 activity. Regulates LYN activity by modulating its tyrosine phosphorylation. The sequence is that of SAM domain-containing protein SAMSN-1 (SAMSN1) from Homo sapiens (Human).